The primary structure comprises 314 residues: Vacuolar membrane protein SCY_4732 (314 aa).

The tract at residues 32 to 61 (KPTSSVVSETSSKSLPSLTSSAFSTSSGTT) is disordered. The chain crosses the membrane as a helical span at residues 93-113 (VYIAVGAVIGAIFISILIWWL). Residues Ser148, Ser254, and Ser274 each carry the phosphoserine modification. Positions 240-309 (EERKLNLNRP…PSMFLDDVLN (70 aa)) are disordered. Residues 254 to 269 (SPERKEKKINSMEGYH) are compositionally biased toward basic and acidic residues.

The protein belongs to the PRM5 family.

The protein resides in the vacuole membrane. The polypeptide is Vacuolar membrane protein SCY_4732 (Saccharomyces cerevisiae (strain YJM789) (Baker's yeast)).